A 426-amino-acid polypeptide reads, in one-letter code: Histidine--tRNA ligase (426 aa).

This sequence belongs to the class-II aminoacyl-tRNA synthetase family.

Its subcellular location is the cytoplasm. The catalysed reaction is tRNA(His) + L-histidine + ATP = L-histidyl-tRNA(His) + AMP + diphosphate + H(+). The protein is Histidine--tRNA ligase of Saccharolobus islandicus (strain Y.N.15.51 / Yellowstone #2) (Sulfolobus islandicus).